We begin with the raw amino-acid sequence, 453 residues long: Chromosomal replication initiator protein DnaA (453 aa).

Positions 1-71 (MSEKEIWEKV…QAILFDVVGY (71 aa)) are domain I, interacts with DnaA modulators. Residues 71–114 (YEVKPHFITTEELANYSNNETATPKETTKPSTETTEDNHVLGRE) form a domain II region. The interval 115-331 (QFNAHNTFDT…GALTRLLAYS (217 aa)) is domain III, AAA+ region. ATP contacts are provided by Gly159, Gly161, Lys162, and Thr163. The tract at residues 332-453 (QLLGKPITTE…ENLEKEIRNV (122 aa)) is domain IV, binds dsDNA.

The protein belongs to the DnaA family. As to quaternary structure, oligomerizes as a right-handed, spiral filament on DNA at oriC.

It localises to the cytoplasm. Its function is as follows. Plays an essential role in the initiation and regulation of chromosomal replication. ATP-DnaA binds to the origin of replication (oriC) to initiate formation of the DNA replication initiation complex once per cell cycle. Binds the DnaA box (a 9 base pair repeat at the origin) and separates the double-stranded (ds)DNA. Forms a right-handed helical filament on oriC DNA; dsDNA binds to the exterior of the filament while single-stranded (ss)DNA is stabiized in the filament's interior. The ATP-DnaA-oriC complex binds and stabilizes one strand of the AT-rich DNA unwinding element (DUE), permitting loading of DNA polymerase. After initiation quickly degrades to an ADP-DnaA complex that is not apt for DNA replication. Binds acidic phospholipids. The sequence is that of Chromosomal replication initiator protein DnaA from Staphylococcus aureus (strain bovine RF122 / ET3-1).